Here is a 621-residue protein sequence, read N- to C-terminus: Glutamyl-tRNA(Gln) amidotransferase subunit E (621 aa).

It belongs to the GatB/GatE family. GatE subfamily. In terms of assembly, heterodimer of GatD and GatE.

It catalyses the reaction L-glutamyl-tRNA(Gln) + L-glutamine + ATP + H2O = L-glutaminyl-tRNA(Gln) + L-glutamate + ADP + phosphate + H(+). In terms of biological role, allows the formation of correctly charged Gln-tRNA(Gln) through the transamidation of misacylated Glu-tRNA(Gln) in organisms which lack glutaminyl-tRNA synthetase. The reaction takes place in the presence of glutamine and ATP through an activated gamma-phospho-Glu-tRNA(Gln). The GatDE system is specific for glutamate and does not act on aspartate. The polypeptide is Glutamyl-tRNA(Gln) amidotransferase subunit E (Methanobrevibacter smithii (strain ATCC 35061 / DSM 861 / OCM 144 / PS)).